The sequence spans 292 residues: tRNA (guanine-N(7)-)-methyltransferase (292 aa).

The segment at Met1 to Lys52 is disordered. S-adenosyl-L-methionine is bound by residues Gly106, Glu129–Ile130, Asn166–Ala167, and Cys186. The active site involves Asp189. An S-adenosyl-L-methionine-binding site is contributed by Thr264–Glu266.

It belongs to the class I-like SAM-binding methyltransferase superfamily. TrmB family. Forms a complex with TRM82.

Its subcellular location is the nucleus. The enzyme catalyses guanosine(46) in tRNA + S-adenosyl-L-methionine = N(7)-methylguanosine(46) in tRNA + S-adenosyl-L-homocysteine. Its pathway is tRNA modification; N(7)-methylguanine-tRNA biosynthesis. In terms of biological role, catalyzes the formation of N(7)-methylguanine at position 46 (m7G46) in tRNA. The sequence is that of tRNA (guanine-N(7)-)-methyltransferase from Debaryomyces hansenii (strain ATCC 36239 / CBS 767 / BCRC 21394 / JCM 1990 / NBRC 0083 / IGC 2968) (Yeast).